The chain runs to 525 residues: Probable pectinesterase/pectinesterase inhibitor 44 (525 aa).

The N-terminal stretch at 1–19 is a signal peptide; sequence MSCLKYFLILLMLGLCVSS. The tract at residues 30-153 is pectinesterase inhibitor 44; sequence VPASEFVSSI…YSMLRELLPL (124 aa). N-linked (GlcNAc...) asparagine glycosylation occurs at Asn98. The segment at 157–192 is disordered; it reads EQKPKAVSKPGPIAKGPKAPPGRKLRDTDEDESLQF. A pectinesterase 44 region spans residues 212-509; the sequence is DVSVALDGTG…FTVSQFIKGN (298 aa). N-linked (GlcNAc...) asparagine glycans are attached at residues Asn222 and Asn278. Residues Thr287 and Gln317 each coordinate substrate. The active-site Proton donor; for pectinesterase activity is Asp340. Cys354 and Cys374 are joined by a disulfide. The Nucleophile; for pectinesterase activity role is filled by Asp361. 2 N-linked (GlcNAc...) asparagine glycosylation sites follow: Asn409 and Asn421. Residues Arg429 and Trp431 each contribute to the substrate site. 3 N-linked (GlcNAc...) asparagine glycosylation sites follow: Asn443, Asn492, and Asn499.

This sequence in the N-terminal section; belongs to the PMEI family. In the C-terminal section; belongs to the pectinesterase family. In terms of tissue distribution, expressed in siliques.

It is found in the secreted. Its subcellular location is the cell wall. It carries out the reaction [(1-&gt;4)-alpha-D-galacturonosyl methyl ester](n) + n H2O = [(1-&gt;4)-alpha-D-galacturonosyl](n) + n methanol + n H(+). Its pathway is glycan metabolism; pectin degradation; 2-dehydro-3-deoxy-D-gluconate from pectin: step 1/5. Its function is as follows. Acts in the modification of cell walls via demethylesterification of cell wall pectin. The chain is Probable pectinesterase/pectinesterase inhibitor 44 (PME44) from Arabidopsis thaliana (Mouse-ear cress).